A 257-amino-acid polypeptide reads, in one-letter code: 3-deoxy-manno-octulosonate cytidylyltransferase (257 aa).

Belongs to the KdsB family.

It localises to the cytoplasm. It carries out the reaction 3-deoxy-alpha-D-manno-oct-2-ulosonate + CTP = CMP-3-deoxy-beta-D-manno-octulosonate + diphosphate. It participates in nucleotide-sugar biosynthesis; CMP-3-deoxy-D-manno-octulosonate biosynthesis; CMP-3-deoxy-D-manno-octulosonate from 3-deoxy-D-manno-octulosonate and CTP: step 1/1. It functions in the pathway bacterial outer membrane biogenesis; lipopolysaccharide biosynthesis. Functionally, activates KDO (a required 8-carbon sugar) for incorporation into bacterial lipopolysaccharide in Gram-negative bacteria. This is 3-deoxy-manno-octulosonate cytidylyltransferase from Rhodospirillum centenum (strain ATCC 51521 / SW).